Reading from the N-terminus, the 260-residue chain is Small ribosomal subunit protein uS2 (260 aa).

The protein belongs to the universal ribosomal protein uS2 family.

This chain is Small ribosomal subunit protein uS2, found in Gluconacetobacter diazotrophicus (strain ATCC 49037 / DSM 5601 / CCUG 37298 / CIP 103539 / LMG 7603 / PAl5).